The primary structure comprises 449 residues: MAKEINNDTIAKFENDLNNHPVFNVASHAAQENGIYKASQNLQTKIDLDPIFSIEIDTGKPADQKQSGRCWMFSALNTMRHPLQKKFKLQDFELSQNYTNFWDKFEKSNWFFENVIATADKDLGDRKVSFLFATPQQDGGQWDMLCGIIEKYGIVPKSVYPETANATNSSALNDTLNTLLRKDGLELRRLVNAGKSEDEVQARKEEMLNDVFRVLAISTCVPPKKFNFEYRDDNHNYHIDKDITPKEFFDKYVGMDLANHISTINAPTSDKPFHKVFSVEYLGNVEGGRQVRHLNLKVDEMKDLIIKQLNNGEVVWFGSNVVKDSERRAGLLATNLYRRDQLFDVDFSMSKADKLDSGESMMDHAMVITGVDIVDGKPTKWKIENSWGEKPGFKGYFVMSDSWFDSFVYQAVINKDILPEDLKKAYDEGKDNPIQLLPWDPMGALAFKY.

Residues Cys-70, His-364, and Asn-385 contribute to the active site.

It belongs to the peptidase C1 family. In terms of assembly, homohexamer.

Its subcellular location is the cytoplasm. It carries out the reaction Inactivates bleomycin B2 (a cytotoxic glycometallopeptide) by hydrolysis of a carboxyamide bond of beta-aminoalanine, but also shows general aminopeptidase activity. The specificity varies somewhat with source, but amino acid arylamides of Met, Leu and Ala are preferred.. The sequence is that of Aminopeptidase C (pepC) from Lactobacillus helveticus (Lactobacillus suntoryeus).